Here is a 429-residue protein sequence, read N- to C-terminus: Saccharopine dehydrogenase-like oxidoreductase (429 aa).

Alanine 2 carries the post-translational modification N-acetylalanine. Serine 209, serine 215, and serine 217 each carry phosphoserine.

It belongs to the saccharopine dehydrogenase family.

The polypeptide is Saccharopine dehydrogenase-like oxidoreductase (Sccpdh) (Mus musculus (Mouse)).